Here is a 161-residue protein sequence, read N- to C-terminus: Protein-export protein SecB (161 aa).

Belongs to the SecB family. In terms of assembly, homotetramer, a dimer of dimers. One homotetramer interacts with 1 SecA dimer.

It is found in the cytoplasm. Functionally, one of the proteins required for the normal export of preproteins out of the cell cytoplasm. It is a molecular chaperone that binds to a subset of precursor proteins, maintaining them in a translocation-competent state. It also specifically binds to its receptor SecA. The polypeptide is Protein-export protein SecB (Shewanella putrefaciens (strain CN-32 / ATCC BAA-453)).